Reading from the N-terminus, the 212-residue chain is MNSKQCVVIAIAGASASGKSLIAKTIYEELCRDLGTDQIGVIAEDAYYRDQGHLSMDERVLTNYDHPKALDHELLCQHLQALKDGNPVDIPVYSYTEHTRTDEKVNLTPKKVIILEGILLLTDPALRDQMDASVFMDTPLDICFMRRLSRDVAERGRTMESVMSQYTETVRPMFLQFIEPSKQYADIIVPRGGKNRIATDILKARIQHLLAK.

13–20 lines the ATP pocket; it reads GASASGKS.

Belongs to the uridine kinase family.

The protein localises to the cytoplasm. It carries out the reaction uridine + ATP = UMP + ADP + H(+). The enzyme catalyses cytidine + ATP = CMP + ADP + H(+). Its pathway is pyrimidine metabolism; CTP biosynthesis via salvage pathway; CTP from cytidine: step 1/3. The protein operates within pyrimidine metabolism; UMP biosynthesis via salvage pathway; UMP from uridine: step 1/1. This is Uridine kinase from Shewanella piezotolerans (strain WP3 / JCM 13877).